The chain runs to 211 residues: Small ribosomal subunit protein uS3 (211 aa).

In terms of domain architecture, KH type-2 spans 38-106; that stretch reads LRSFVKKTFH…DVELHIVEVK (69 aa).

It belongs to the universal ribosomal protein uS3 family. In terms of assembly, part of the 30S ribosomal subunit. Forms a tight complex with proteins S10 and S14.

Functionally, binds the lower part of the 30S subunit head. Binds mRNA in the 70S ribosome, positioning it for translation. This chain is Small ribosomal subunit protein uS3, found in Anaplasma marginale (strain Florida).